The sequence spans 626 residues: Extracellular metalloproteinase 1 (626 aa).

A signal peptide spans 1 to 17; that stretch reads MLSSLLAGAGLVALAAS. A propeptide spanning residues 18-241 is cleaved from the precursor; the sequence is HPTSHGNALT…IHGVVDYSAD (224 aa). Residue asparagine 315 is glycosylated (N-linked (GlcNAc...) asparagine). Residue histidine 425 coordinates Zn(2+). The active site involves glutamate 426. Histidine 429 lines the Zn(2+) pocket. A disordered region spans residues 606 to 626; the sequence is GSGARYSSTARTGSTALPSGC. Over residues 610 to 626 the composition is skewed to polar residues; the sequence is RYSSTARTGSTALPSGC.

The protein belongs to the peptidase M36 family. Zn(2+) is required as a cofactor.

The protein resides in the secreted. In terms of biological role, secreted metalloproteinase that allows assimilation of proteinaceous substrates. In Phaeosphaeria nodorum (strain SN15 / ATCC MYA-4574 / FGSC 10173) (Glume blotch fungus), this protein is Extracellular metalloproteinase 1 (MEP1).